A 551-amino-acid chain; its full sequence is Interleukin-2 receptor subunit beta (551 aa).

A signal peptide spans 1–26 (MAAPALSWRLPLLILLLPLATPWASA). At 27 to 240 (TVNGTSQFTC…TKPASLGKDT (214 aa)) the chain is on the extracellular side. Residues Asn-29, Asn-43, and Asn-71 are each glycosylated (N-linked (GlcNAc...) asparagine). A disulfide bond links Cys-36 and Cys-46. Cys-74 and Cys-86 are oxidised to a cystine. In terms of domain architecture, Fibronectin type-III spans 134–234 (APISLQVVHV…QPLAFRTKPA (101 aa)). Asn-149 carries an N-linked (GlcNAc...) asparagine glycan. The WSXWS motif signature appears at 220–224 (WSPWS). The chain crosses the membrane as a helical span at residues 241 to 265 (IPWLGHLLVGLSGAFGFIILVYLLI). Over 266–551 (NCRNTGPWLK…LQGQDPTHLV (286 aa)) the chain is Cytoplasmic. Positions 278-286 (LKCHTPDPS) match the Box 1 motif motif. 2 disordered regions span residues 393 to 412 (DEGVAGAPTGSSPQPLQPLS) and 433 to 476 (SLLG…GPPT).

It belongs to the type I cytokine receptor family. Type 4 subfamily. Non-covalent dimer of an alpha and a beta subunit. IL2R exists in 3 different forms: a high affinity dimer, an intermediate affinity monomer (beta subunit), and a low affinity monomer (alpha subunit). The high and intermediate affinity forms also associate with a gamma subunit. Interacts with SHB upon interleukin stimulation.

It is found in the cell membrane. The protein localises to the cell surface. Receptor for interleukin-2. This beta subunit is involved in receptor mediated endocytosis and transduces the mitogenic signals of IL2. Probably in association with IL15RA, involved in the stimulation of neutrophil phagocytosis by IL15. This Pan troglodytes (Chimpanzee) protein is Interleukin-2 receptor subunit beta (IL2RB).